Consider the following 333-residue polypeptide: MSATLQKLAELTGSSLIGDSTLTICSVANLNHATPRDLVFCEDEKYLGDAFASPAAAIVVGEFAASAHDAPKPLLISTQPRLAFAKAAKVLRSHKKRSGGIVHPTAVVPPTVVFGAEVVVGAYVVLGEHVHIGDRVCIGAGVCIGSDVKIGTDCEIHSRVTIYHGTHIGNHVIIHAGAVLGSDGFGYVRDKLTGRYHQMPQIGHLIVGDHVDIGANVTIDRGGLEDTVIGAGTKLDNLVHIGHNVRIGENVVIAAQTGISGSCTIGAGSIIGGQVGMGDHATLEEGTILGGQSGILSEKIFREKGPCFGTPAKPLKQYLREQAALSRLSRRSE.

H243 functions as the Proton acceptor in the catalytic mechanism.

It belongs to the transferase hexapeptide repeat family. LpxD subfamily. In terms of assembly, homotrimer.

It catalyses the reaction a UDP-3-O-[(3R)-3-hydroxyacyl]-alpha-D-glucosamine + a (3R)-hydroxyacyl-[ACP] = a UDP-2-N,3-O-bis[(3R)-3-hydroxyacyl]-alpha-D-glucosamine + holo-[ACP] + H(+). The protein operates within bacterial outer membrane biogenesis; LPS lipid A biosynthesis. Its function is as follows. Catalyzes the N-acylation of UDP-3-O-acylglucosamine using 3-hydroxyacyl-ACP as the acyl donor. Is involved in the biosynthesis of lipid A, a phosphorylated glycolipid that anchors the lipopolysaccharide to the outer membrane of the cell. This is UDP-3-O-acylglucosamine N-acyltransferase 2 from Koribacter versatilis (strain Ellin345).